The primary structure comprises 706 residues: Elongation factor G (706 aa).

The 288-residue stretch at 8-295 (ELYRNFGIMA…AVIDYLPSPL (288 aa)) folds into the tr-type G domain. Residues 17–24 (AHIDAGKT), 92–96 (DTPGH), and 146–149 (NKMD) contribute to the GTP site.

It belongs to the TRAFAC class translation factor GTPase superfamily. Classic translation factor GTPase family. EF-G/EF-2 subfamily.

It is found in the cytoplasm. Functionally, catalyzes the GTP-dependent ribosomal translocation step during translation elongation. During this step, the ribosome changes from the pre-translocational (PRE) to the post-translocational (POST) state as the newly formed A-site-bound peptidyl-tRNA and P-site-bound deacylated tRNA move to the P and E sites, respectively. Catalyzes the coordinated movement of the two tRNA molecules, the mRNA and conformational changes in the ribosome. In Ruegeria sp. (strain TM1040) (Silicibacter sp.), this protein is Elongation factor G.